The sequence spans 720 residues: Collectin-12 (720 aa).

Residues 1 to 37 (MKDDFNDEEEVQSFGYKRFGIQEGNECTKCKNDWALR) are Cytoplasmic-facing. A helical; Signal-anchor for type II membrane protein transmembrane segment spans residues 38–58 (VAIALLYVLCALLTIAVAVLG). Topologically, residues 59–720 (YKVVQRMDNV…RTNESKVPVL (662 aa)) are extracellular. 3 coiled-coil regions span residues 95 to 120 (EKSE…QLSD), 216 to 267 (ISSL…LAAN), and 377 to 408 (LHGL…LDKE). A disordered region spans residues 433–576 (FTILQGPPGP…GPPGLPGLPA (144 aa)). Collagen-like domains follow at residues 444–503 (GPRG…PGPK) and 510–569 (GRQG…PGPP). A compositionally biased stretch (basic and acidic residues) spans 460 to 479 (PKGEKGEKGAPGDAGPKGEK). Positions 488–503 (PGLKGPPGSRGSPGPK) are enriched in low complexity. Gly residues predominate over residues 504-513 (GSRGSGGRQG). Residues 527-560 (PGRDGQPGPTGPQGPQGLRGPAGPAGLEGARGPV) show a composition bias toward low complexity. Residues 562-576 (PIGPPGPPGLPGLPA) are compositionally biased toward pro residues. Cystine bridges form between Cys604–Cys615, Cys634–Cys709, and Cys687–Cys701. The C-type lectin domain maps to 611 to 710 (FREQCYHFSA…CTERIGFICE (100 aa)). Residues Ile643, Asn645, and Glu649 each contribute to the Ca(2+) site. Residues Lys670, Gln673, and Asp675 each contribute to the a carbohydrate site. Residues Gln673, Asp675, Asn676, Glu685, Asp686, Asn697, Asp698, and Glu710 each contribute to the Ca(2+) site. Residue Glu685 participates in a carbohydrate binding. A carbohydrate-binding residues include Asn697 and Asp698.

It is found in the membrane. Scavenger receptor that displays several functions associated with host defense. Binds to carbohydrates. The protein is Collectin-12 (colec12) of Danio rerio (Zebrafish).